Reading from the N-terminus, the 208-residue chain is MTEKDESVKSNSEYTEEQEVKNEDTSTVENVEDTTSDSDNSSNDSSNEESSEETAVDPKDEEIQQLQLKANENEEKYLRLYAEFENYKRRIQKENETNKTYQSQRVLTDILPTIDNIERALQIEGDDESFKSLQKGVQMVHESLLRALKDNGLEEIESEGQAFDPNFHQAVVQDDNPDFKSGDITQELQKGYKLKDRVLRPSMVKVNQ.

The tract at residues 1–62 is disordered; it reads MTEKDESVKS…ETAVDPKDEE (62 aa). The span at 46–55 shows a compositional bias: acidic residues; sequence SNEESSEETA.

The protein belongs to the GrpE family. In terms of assembly, homodimer.

The protein localises to the cytoplasm. In terms of biological role, participates actively in the response to hyperosmotic and heat shock by preventing the aggregation of stress-denatured proteins, in association with DnaK and GrpE. It is the nucleotide exchange factor for DnaK and may function as a thermosensor. Unfolded proteins bind initially to DnaJ; upon interaction with the DnaJ-bound protein, DnaK hydrolyzes its bound ATP, resulting in the formation of a stable complex. GrpE releases ADP from DnaK; ATP binding to DnaK triggers the release of the substrate protein, thus completing the reaction cycle. Several rounds of ATP-dependent interactions between DnaJ, DnaK and GrpE are required for fully efficient folding. The chain is Protein GrpE from Staphylococcus haemolyticus (strain JCSC1435).